Reading from the N-terminus, the 238-residue chain is Large ribosomal subunit protein uL2 (238 aa).

Disordered regions lie at residues 1–34 (MGKR…PPLS) and 197–238 (VDHP…RRKR). Basic residues predominate over residues 224–238 (KVGHIAARRTGRRKR).

This sequence belongs to the universal ribosomal protein uL2 family. In terms of assembly, part of the 50S ribosomal subunit. Forms a bridge to the 30S subunit in the 70S ribosome.

Functionally, one of the primary rRNA binding proteins. Required for association of the 30S and 50S subunits to form the 70S ribosome, for tRNA binding and peptide bond formation. It has been suggested to have peptidyltransferase activity; this is somewhat controversial. Makes several contacts with the 16S rRNA in the 70S ribosome. The protein is Large ribosomal subunit protein uL2 of Aeropyrum pernix (strain ATCC 700893 / DSM 11879 / JCM 9820 / NBRC 100138 / K1).